Consider the following 88-residue polypeptide: Small ribosomal subunit protein bS20 (88 aa).

The disordered stretch occupies residues 1-20 (MPNIKSAIKRTKTNNERRAH).

The protein belongs to the bacterial ribosomal protein bS20 family.

Its function is as follows. Binds directly to 16S ribosomal RNA. The protein is Small ribosomal subunit protein bS20 of Bacillus velezensis (strain DSM 23117 / BGSC 10A6 / LMG 26770 / FZB42) (Bacillus amyloliquefaciens subsp. plantarum).